A 490-amino-acid polypeptide reads, in one-letter code: Betaine aldehyde dehydrogenase (490 aa).

Position 93 (Asp93) interacts with K(+). Residue 150 to 152 participates in NAD(+) binding; it reads GAW. Residue Lys162 is the Charge relay system of the active site. 176-179 contributes to the NAD(+) binding site; that stretch reads KPSE. Val180 contributes to the K(+) binding site. Residue 230 to 233 coordinates NAD(+); that stretch reads GIAS. K(+) is bound at residue Leu246. The Proton acceptor role is filled by Glu252. The NAD(+) site is built by Gly254, Cys286, and Glu387. Cys286 serves as the catalytic Nucleophile. Cysteine sulfenic acid (-SOH) is present on Cys286. K(+) is bound by residues Lys457 and Gly460. Glu464 (charge relay system) is an active-site residue.

The protein belongs to the aldehyde dehydrogenase family. Dimer of dimers. K(+) serves as cofactor.

It catalyses the reaction betaine aldehyde + NAD(+) + H2O = glycine betaine + NADH + 2 H(+). It functions in the pathway amine and polyamine biosynthesis; betaine biosynthesis via choline pathway; betaine from betaine aldehyde: step 1/1. Functionally, involved in the biosynthesis of the osmoprotectant glycine betaine. Catalyzes the irreversible oxidation of betaine aldehyde to the corresponding acid. This Pectobacterium carotovorum subsp. carotovorum (strain PC1) protein is Betaine aldehyde dehydrogenase.